The following is a 582-amino-acid chain: mRNA-decapping enzyme 1A (582 aa).

Ser-62 bears the Phosphoserine mark. A compositionally biased stretch (basic and acidic residues) spans 132 to 141 (RSQQAARDKQ). Disordered stretches follow at residues 132-154 (RSQQ…DHRP) and 172-214 (QMGD…PSGH). Phosphoserine occurs at positions 142, 179, 180, 315, 319, and 334. Over residues 173 to 196 (MGDSNISSPGLQPSTQLSNLGSTE) the composition is skewed to polar residues. Thr-348 carries the phosphothreonine modification. At Ser-353 the chain carries Phosphoserine. Arg-376 is subject to Asymmetric dimethylarginine. The residue at position 401 (Thr-401) is a Phosphothreonine. Residues Ser-422, Ser-522, Ser-523, and Ser-525 each carry the phosphoserine modification. The tract at residues 513–536 (RSSDLERKASSPSPLTIGTPESQR) is disordered. The span at 522–533 (SSPSPLTIGTPE) shows a compositional bias: polar residues. Thr-528 and Thr-531 each carry phosphothreonine.

This sequence belongs to the DCP1 family. (Microbial infection) Interacts with rotavirus A non-structural protein 2; this interaction probably plays a role in the sequestration of DCP1A in viral factories. Interacts with rotavirus A non-structural protein 5; this interaction probably plays a role in its sequestration in viral factories. In terms of assembly, forms a complex with EDC3, DCP2, DDX6 and EDC4/HEDLS, within this complex directly interacts with EDC3. Part of a cytoplasmic complex containing proteins involved in mRNA decay, including XRN1 and LSM1. Interacts with DCP1B. Interacts with DCP2. Interacts with DDX17 in an RNA-independent manner. Interacts with PNRC2. Interacts with SMAD4. Interacts with UPF1. Interacts with ZC3HAV1. Interacts with ZFP36L1. Interacts with NBDY. Interacts with DHX34; the interaction is RNA-independent. As to expression, detected in heart, brain, placenta, lung, skeletal muscle, liver, kidney and pancreas.

It localises to the cytoplasm. The protein resides in the P-body. Its subcellular location is the nucleus. It carries out the reaction a 5'-end (N(7)-methyl 5'-triphosphoguanosine)-ribonucleoside in mRNA + H2O = N(7)-methyl-GDP + a 5'-end phospho-ribonucleoside in mRNA + 2 H(+). Its function is as follows. Necessary for the degradation of mRNAs, both in normal mRNA turnover and in nonsense-mediated mRNA decay. Removes the 7-methyl guanine cap structure from mRNA molecules, yielding a 5'-phosphorylated mRNA fragment and 7m-GDP. Contributes to the transactivation of target genes after stimulation by TGFB1. Essential for embryonic development. This is mRNA-decapping enzyme 1A (DCP1A) from Homo sapiens (Human).